Reading from the N-terminus, the 310-residue chain is Putative HTH-type transcriptional regulatory protein M1425_1284 (310 aa).

Positions 125-180 (LKHKREEMGYSIGDVAKFLGVSRKAIYDYEKGDSDVSLEVAEKLIDLFGDDIIGDV) constitute an HTH cro/C1-type domain. The H-T-H motif DNA-binding region spans 136 to 155 (IGDVAKFLGVSRKAIYDYEK).

This is Putative HTH-type transcriptional regulatory protein M1425_1284 from Saccharolobus islandicus (strain M.14.25 / Kamchatka #1) (Sulfolobus islandicus).